Reading from the N-terminus, the 765-residue chain is Polyadenylate-binding protein, cytoplasmic and nuclear (765 aa).

Residues Met1 to Ser37 show a composition bias toward low complexity. A disordered region spans residues Met1 to Ala49. The segment covering Thr38–Ser48 has biased composition (polar residues). 4 consecutive RRM domains span residues Ala49 to Arg127, Gly137 to Ser214, Thr230 to Lys307, and Val333 to Arg470. 2 disordered regions span residues Val364–Lys427 and Pro619–Ala657. Over residues Glu377–Lys427 the composition is skewed to basic and acidic residues. Residues Val628–Pro637 show a composition bias toward low complexity. Positions Ala659–Lys736 constitute a PABC domain. Positions Asn737 to Ser765 are disordered. Over residues Ala749–Ser765 the composition is skewed to basic and acidic residues.

It belongs to the polyadenylate-binding protein type-1 family.

It is found in the cytoplasm. The protein resides in the nucleus. In terms of biological role, binds the poly(A) tail of mRNA. Appears to be an important mediator of the multiple roles of the poly(A) tail in mRNA biogenesis, stability and translation. In the nucleus, involved in both mRNA cleavage and polyadenylation. Is also required for efficient mRNA export to the cytoplasm. Acts in concert with a poly(A)-specific nuclease (PAN) to affect poly(A) tail shortening, which may occur concomitantly with either nucleocytoplasmic mRNA transport or translational initiation. In the cytoplasm, stimulates translation initiation and regulates mRNA decay through translation termination-coupled poly(A) shortening, probably mediated by PAN. The protein is Polyadenylate-binding protein, cytoplasmic and nuclear (pab1) of Aspergillus oryzae (strain ATCC 42149 / RIB 40) (Yellow koji mold).